The following is a 219-amino-acid chain: PKHD-type hydroxylase Plav_0037 (219 aa).

Residues Asn-78–Ser-172 enclose the Fe2OG dioxygenase domain. Positions 96, 98, and 153 each coordinate Fe cation. Arg-163 contacts 2-oxoglutarate.

The cofactor is Fe(2+). Requires L-ascorbate as cofactor.

In Parvibaculum lavamentivorans (strain DS-1 / DSM 13023 / NCIMB 13966), this protein is PKHD-type hydroxylase Plav_0037.